The chain runs to 347 residues: NADH-ubiquinone oxidoreductase chain 2 (347 aa).

The next 11 membrane-spanning stretches (helical) occupy residues 3 to 23 (PPILIIIMSTVMSGTMIVLTS), 25 to 45 (HWLLIWIGFEMNMLAIIPILM), 60 to 80 (FLTQATASMLLMMGIIINLMF), 96 to 116 (GLVTIALTMKLGMAPFHFWVP), 122 to 142 (ISLSSGMILLTWQKIAPLSIL), 153 to 173 (LLITMAIASVLIGGWGGLNQT), 178 to 198 (ILAYSSIAHMGWMAVILTYNP), 200 to 220 (LMILNLTIYITMTLSTFMLFM), 237 to 257 (LPLMTSLILVLMMSLGGLPPL), 274 to 294 (DMIILPTFMAITALLNLYFYM), and 323 to 343 (IILLPPLIIISTMLLPMTPMM).

The protein belongs to the complex I subunit 2 family. Core subunit of respiratory chain NADH dehydrogenase (Complex I) which is composed of 45 different subunits. Interacts with TMEM242.

It localises to the mitochondrion inner membrane. The catalysed reaction is a ubiquinone + NADH + 5 H(+)(in) = a ubiquinol + NAD(+) + 4 H(+)(out). In terms of biological role, core subunit of the mitochondrial membrane respiratory chain NADH dehydrogenase (Complex I) which catalyzes electron transfer from NADH through the respiratory chain, using ubiquinone as an electron acceptor. Essential for the catalytic activity and assembly of complex I. The polypeptide is NADH-ubiquinone oxidoreductase chain 2 (Halichoerus grypus (Gray seal)).